We begin with the raw amino-acid sequence, 414 residues long: Carbohydrate sulfotransferase 12 (414 aa).

At 1–5 (MTKAR) the chain is on the cytoplasmic side. Residues 6-26 (LFRLWLVLGSVFMILLIIVYW) traverse the membrane as a helical; Signal-anchor for type II membrane protein segment. Topologically, residues 27–414 (DSAGAAHFYL…YPKPENLLRD (388 aa)) are lumenal. A disordered region spans residues 80–125 (QSDLPRKETEQPPAPGSMEESVRGYDWSPRDARRSPDQGRQQAERR). Positions 99 to 125 (ESVRGYDWSPRDARRSPDQGRQQAERR) are enriched in basic and acidic residues. A glycan (N-linked (GlcNAc...) asparagine) is linked at Asn134. Position 171–177 (171–177 (PKVACTN)) interacts with 3'-phosphoadenylyl sulfate. N-linked (GlcNAc...) asparagine glycosylation is present at Asn209. 245–253 (RDPFVRLIS) lines the 3'-phosphoadenylyl sulfate pocket. 2 N-linked (GlcNAc...) asparagine glycosylation sites follow: Asn280 and Asn370.

It belongs to the sulfotransferase 2 family. As to expression, widely expressed. Expressed a high level in spinal chord, heart, spleen, thyroid, pituitary gland, adrenal gland, peripheral blood leukocytes, thymus, lung, small intestine, fetal kidney, fetal spleen and fetal lung.

The protein resides in the golgi apparatus membrane. The catalysed reaction is chondroitin beta-D-glucuronate + n 3'-phosphoadenylyl sulfate = chondroitin 4'-sulfate + n adenosine 3',5'-bisphosphate + n H(+). In terms of biological role, catalyzes the transfer of sulfate to position 4 of the N-acetylgalactosamine (GalNAc) residue of chondroitin and desulfated dermatan sulfate. Chondroitin sulfate constitutes the predominant proteoglycan present in cartilage and is distributed on the surfaces of many cells and extracellular matrices. Activity toward partially desulfated dermatan sulfate is however lower. Does not form 4, 6-di-O-sulfated GalNAc when chondroitin sulfate C is used as an acceptor. This chain is Carbohydrate sulfotransferase 12 (CHST12), found in Homo sapiens (Human).